A 330-amino-acid chain; its full sequence is UPF0353 protein MAP_3434 (330 aa).

The next 2 membrane-spanning stretches (helical) occupy residues 21 to 41 (GMLLFGLVPLALLALYLVVQA) and 63 to 83 (LPIAVSLLSLVLLTIALATPT). Residues 94 to 289 (VIMLVIDMSQ…GELQKSYNAI (196 aa)) enclose the VWFA domain. A helical membrane pass occupies residues 304-324 (AGWLRLGVLTALIATALALLI).

It belongs to the UPF0353 family.

Its subcellular location is the cell membrane. The polypeptide is UPF0353 protein MAP_3434 (Mycolicibacterium paratuberculosis (strain ATCC BAA-968 / K-10) (Mycobacterium paratuberculosis)).